Reading from the N-terminus, the 103-residue chain is Large ribosomal subunit protein uL24 (103 aa).

This sequence belongs to the universal ribosomal protein uL24 family. Part of the 50S ribosomal subunit.

In terms of biological role, one of two assembly initiator proteins, it binds directly to the 5'-end of the 23S rRNA, where it nucleates assembly of the 50S subunit. Functionally, one of the proteins that surrounds the polypeptide exit tunnel on the outside of the subunit. In Pasteurella multocida (strain Pm70), this protein is Large ribosomal subunit protein uL24.